The following is a 211-amino-acid chain: Thymidylate kinase (211 aa).

Position 7–14 (G7–S14) interacts with ATP.

The protein belongs to the thymidylate kinase family.

It carries out the reaction dTMP + ATP = dTDP + ADP. Phosphorylation of dTMP to form dTDP in both de novo and salvage pathways of dTTP synthesis. This Mesomycoplasma hyopneumoniae (strain 232) (Mycoplasma hyopneumoniae) protein is Thymidylate kinase.